Consider the following 272-residue polypeptide: Alcohol dehydrogenase-related 31 kDa protein (272 aa).

11-34 (YVADCGGIALETSKVLMTKNIAKL) lines the NAD(+) pocket. Position 139 (Ser-139) interacts with substrate. Tyr-152 functions as the Proton acceptor in the catalytic mechanism.

Belongs to the short-chain dehydrogenases/reductases (SDR) family.

This Drosophila melanogaster (Fruit fly) protein is Alcohol dehydrogenase-related 31 kDa protein (Adhr).